The sequence spans 327 residues: Transaldolase (327 aa).

The active-site Schiff-base intermediate with substrate is the Lys132.

It belongs to the transaldolase family. Type 1 subfamily. In terms of assembly, homodimer.

It localises to the cytoplasm. The enzyme catalyses D-sedoheptulose 7-phosphate + D-glyceraldehyde 3-phosphate = D-erythrose 4-phosphate + beta-D-fructose 6-phosphate. Its pathway is carbohydrate degradation; pentose phosphate pathway; D-glyceraldehyde 3-phosphate and beta-D-fructose 6-phosphate from D-ribose 5-phosphate and D-xylulose 5-phosphate (non-oxidative stage): step 2/3. Transaldolase is important for the balance of metabolites in the pentose-phosphate pathway. The polypeptide is Transaldolase (Chlamydia caviae (strain ATCC VR-813 / DSM 19441 / 03DC25 / GPIC) (Chlamydophila caviae)).